We begin with the raw amino-acid sequence, 510 residues long: 2,3-bisphosphoglycerate-independent phosphoglycerate mutase (510 aa).

Mn(2+) contacts are provided by D12 and S62. The active-site Phosphoserine intermediate is the S62. Residues H123, 153-154 (RD), R185, R191, 260-263 (RPDR), and K335 each bind substrate. Residues D402, H406, D443, H444, and H461 each coordinate Mn(2+).

Belongs to the BPG-independent phosphoglycerate mutase family. Monomer. Mn(2+) is required as a cofactor.

It catalyses the reaction (2R)-2-phosphoglycerate = (2R)-3-phosphoglycerate. The protein operates within carbohydrate degradation; glycolysis; pyruvate from D-glyceraldehyde 3-phosphate: step 3/5. Catalyzes the interconversion of 2-phosphoglycerate and 3-phosphoglycerate. This is 2,3-bisphosphoglycerate-independent phosphoglycerate mutase from Listeria monocytogenes serovar 1/2a (strain ATCC BAA-679 / EGD-e).